We begin with the raw amino-acid sequence, 741 residues long: NAD(P)H-quinone oxidoreductase subunit 5, chloroplastic (741 aa).

Transmembrane regions (helical) follow at residues 9–29 (WIIP…LLLF), 40–60 (WTFL…YLSI), 89–109 (IDPL…LVLI), 125–145 (FAYM…SNLI), 147–167 (VYFF…FWFT), 185–205 (GDFG…SFEF), 221–241 (VNLL…IAKS), 258–278 (TPIS…FLVA), 280–300 (LLPL…IGII), 327–347 (LGYM…FHLI), 354–374 (ALLF…VGYS), 396–416 (TAFL…CFWS), 425–445 (LLFS…TAFY), 547–567 (ILFP…IGIP), 602–622 (FLQN…IAYC), and 720–740 (ISSY…ILFY).

This sequence belongs to the complex I subunit 5 family. In terms of assembly, NDH is composed of at least 16 different subunits, 5 of which are encoded in the nucleus.

Its subcellular location is the plastid. It is found in the chloroplast thylakoid membrane. The catalysed reaction is a plastoquinone + NADH + (n+1) H(+)(in) = a plastoquinol + NAD(+) + n H(+)(out). It carries out the reaction a plastoquinone + NADPH + (n+1) H(+)(in) = a plastoquinol + NADP(+) + n H(+)(out). Functionally, NDH shuttles electrons from NAD(P)H:plastoquinone, via FMN and iron-sulfur (Fe-S) centers, to quinones in the photosynthetic chain and possibly in a chloroplast respiratory chain. The immediate electron acceptor for the enzyme in this species is believed to be plastoquinone. Couples the redox reaction to proton translocation, and thus conserves the redox energy in a proton gradient. The sequence is that of NAD(P)H-quinone oxidoreductase subunit 5, chloroplastic (ndhF) from Arabis hirsuta (Hairy rock-cress).